Reading from the N-terminus, the 49-residue chain is Large ribosomal subunit protein bL36 (49 aa).

Belongs to the bacterial ribosomal protein bL36 family.

In Delftia acidovorans (strain DSM 14801 / SPH-1), this protein is Large ribosomal subunit protein bL36.